The primary structure comprises 104 residues: Integration host factor subunit beta (104 aa).

Belongs to the bacterial histone-like protein family. As to quaternary structure, heterodimer of an alpha and a beta chain.

Functionally, this protein is one of the two subunits of integration host factor, a specific DNA-binding protein that functions in genetic recombination as well as in transcriptional and translational control. The protein is Integration host factor subunit beta (ihfB) of Neisseria gonorrhoeae.